A 106-amino-acid polypeptide reads, in one-letter code: MVNIPKTRNTYCKGKECRKHTQHKVTQYKAGKASLYAQGKRRYDRKQSGYGGQTKQIFHKKAKTTKKVVLRLECVKCKVKMQLALKRCKHFELGGDKKQKGQALQF.

Belongs to the eukaryotic ribosomal protein eL42 family.

This Yarrowia lipolytica (strain CLIB 122 / E 150) (Yeast) protein is Large ribosomal subunit protein eL42 (RPL44).